The sequence spans 79 residues: Probable [Fe-S]-dependent transcriptional repressor (79 aa).

Iron-sulfur cluster-binding residues include Cys-56, Cys-61, Cys-64, and Cys-71.

This sequence belongs to the FeoC family.

Its function is as follows. May function as a transcriptional regulator that controls feoABC expression. In Klebsiella pneumoniae subsp. pneumoniae (strain ATCC 700721 / MGH 78578), this protein is Probable [Fe-S]-dependent transcriptional repressor.